The chain runs to 132 residues: Sec-independent protein translocase protein TatB (132 aa).

Residues 1–21 (MFDIGFWELVLISVVGLVVLG) traverse the membrane as a helical segment. Residues 70-132 (GMEDLSPELK…KVSAADKKAE (63 aa)) form a disordered region. Composition is skewed to basic and acidic residues over residues 96 to 108 (YADK…ETAK) and 115 to 132 (SAEK…KKAE).

This sequence belongs to the TatB family. The Tat system comprises two distinct complexes: a TatABC complex, containing multiple copies of TatA, TatB and TatC subunits, and a separate TatA complex, containing only TatA subunits. Substrates initially bind to the TatABC complex, which probably triggers association of the separate TatA complex to form the active translocon.

Its subcellular location is the cell inner membrane. Part of the twin-arginine translocation (Tat) system that transports large folded proteins containing a characteristic twin-arginine motif in their signal peptide across membranes. Together with TatC, TatB is part of a receptor directly interacting with Tat signal peptides. TatB may form an oligomeric binding site that transiently accommodates folded Tat precursor proteins before their translocation. This is Sec-independent protein translocase protein TatB from Vibrio parahaemolyticus serotype O3:K6 (strain RIMD 2210633).